The primary structure comprises 90 residues: Probable Fe(2+)-trafficking protein (90 aa).

The protein belongs to the Fe(2+)-trafficking protein family.

In terms of biological role, could be a mediator in iron transactions between iron acquisition and iron-requiring processes, such as synthesis and/or repair of Fe-S clusters in biosynthetic enzymes. This is Probable Fe(2+)-trafficking protein from Chromohalobacter salexigens (strain ATCC BAA-138 / DSM 3043 / CIP 106854 / NCIMB 13768 / 1H11).